Reading from the N-terminus, the 102-residue chain is Small ribosomal subunit protein uS10 (102 aa).

This sequence belongs to the universal ribosomal protein uS10 family. Part of the 30S ribosomal subunit.

Involved in the binding of tRNA to the ribosomes. The chain is Small ribosomal subunit protein uS10 from Cenarchaeum symbiosum (strain A).